A 343-amino-acid chain; its full sequence is Adenosine kinase (343 aa).

Aspartate 296 is an active-site residue.

This sequence belongs to the carbohydrate kinase PfkB family. The cofactor is Mg(2+).

The catalysed reaction is adenosine + ATP = AMP + ADP + H(+). Its pathway is purine metabolism; AMP biosynthesis via salvage pathway; AMP from adenosine: step 1/1. Functionally, ATP dependent phosphorylation of adenosine and other related nucleoside analogs to monophosphate derivatives. Can also act on the cytokinin isopentenyladenosine to produce isopentenyladenosine monophosphate. In Physcomitrium patens (Spreading-leaved earth moss), this protein is Adenosine kinase (ADK).